A 507-amino-acid chain; its full sequence is Archaeal-type glutamate synthase [NADPH] (507 aa).

4Fe-4S ferredoxin-type domains follow at residues 10–39 (FVVE…YDEN) and 41–70 (NRVY…VRKN). Residues C19, C22, C25, C29, C50, C53, C56, and C60 each coordinate [4Fe-4S] cluster.

It belongs to the glutamate synthase family. FMN serves as cofactor.

The catalysed reaction is 2 L-glutamate + NADP(+) = L-glutamine + 2-oxoglutarate + NADPH + H(+). This is Archaeal-type glutamate synthase [NADPH] from Thermotoga maritima (strain ATCC 43589 / DSM 3109 / JCM 10099 / NBRC 100826 / MSB8).